Reading from the N-terminus, the 1189-residue chain is Zinc finger CCCH domain-containing protein 6 (1189 aa).

The segment covering 1–12 (MTDSEHAGHDRE) has biased composition (basic and acidic residues). Residues 1–105 (MTDSEHAGHD…HKKRTGFYRD (105 aa)) form a disordered region. Residues 13–28 (DGELEDGEIDDAGFEE) are compositionally biased toward acidic residues. Residues 27–73 (EEIQEKEAKENEKQKSEKAYRKSRKKHKKEREKKKSKRRKREKHKHN) adopt a coiled-coil conformation. A compositionally biased stretch (basic and acidic residues) spans 29–46 (IQEKEAKENEKQKSEKAY). A compositionally biased stretch (basic residues) spans 47–73 (RKSRKKHKKEREKKKSKRRKREKHKHN). 3 C3H1-type zinc fingers span residues 273–299 (KGKQICKYFLEGRCIKGDQCKFDHDAE), 301–328 (EKRKEICKFYLQGYCTKGENCIYMHNEF), and 329–352 (PCKFYHSGAKCYQGDNCKFSHDDL). Residues 353–385 (TKETKKLLDKVLNTDEELINEDERELEELRKRG) adopt a coiled-coil conformation. Disordered regions lie at residues 451–530 (FYTS…GPQN), 630–659 (PPVVQDSPNHGSGSDGSSTRTGHGPLPVPG), 676–755 (YQED…GNQV), 947–1026 (LEQF…PYAP), and 1051–1189 (PRDH…SPFC). The span at 461-478 (QFQGSSPHPQHIYSSGSS) shows a compositional bias: low complexity. A compositionally biased stretch (pro residues) spans 505–525 (AGPPGLPVPQSPPLPPGPPEI). The segment covering 639-659 (HGSGSDGSSTRTGHGPLPVPG) has biased composition (low complexity). Over residues 718–741 (KTLQKQTETLRNQQQPSTELSTPT) the composition is skewed to polar residues. Residues 961–973 (GDPRLQKNFDPRL) show a composition bias toward basic and acidic residues. Low complexity-rich tracts occupy residues 1009-1020 (SGAGTSNSGSGA) and 1056-1069 (SSSTSELATASSGE). A Phosphoserine modification is found at S1158. The segment covering 1164 to 1179 (DPGRETDDKSLKEVFK) has biased composition (basic and acidic residues).

This is Zinc finger CCCH domain-containing protein 6 (ZC3H6) from Homo sapiens (Human).